Reading from the N-terminus, the 271-residue chain is uncharacterized protein (271 aa).

The first 22 residues, 1–22 (MARELLFLACAIVIADSWPAKA), serve as a signal peptide directing secretion.

This is an uncharacterized protein from Sinorhizobium fredii (strain NBRC 101917 / NGR234).